Reading from the N-terminus, the 154-residue chain is Style cell-cycle inhibitor 1-A (154 aa).

Composition is skewed to basic and acidic residues over residues 1–11 (MGSDKKTPEEK) and 24–48 (DEVK…DKSK). Residues 1 to 84 (MGSDKKTPEE…DKSKNKFEEL (84 aa)) form a disordered region. Basic residues predominate over residues 63–77 (GEKHKTKSHKHKDKS).

In terms of tissue distribution, specifically expressed in flowers pistils, especially in stigmas and styles. Barely detected in roots, stems, leaves, sepals, petals and stamen.

It localises to the nucleus. In terms of biological role, component of the auxin signaling transduction pathway that regulates cell proliferation and differentiation during flowers stigmas and styles development. Involved in the regulation of auxin-related genes. This Nicotiana tabacum (Common tobacco) protein is Style cell-cycle inhibitor 1-A.